Here is a 509-residue protein sequence, read N- to C-terminus: Putative aldehyde dehydrogenase family 7 member A1 homolog (509 aa).

244 to 249 (GSTEVG) is an NAD(+) binding site. The Proton acceptor role is filled by glutamate 266. Cysteine 300 serves as the catalytic Nucleophile.

This sequence belongs to the aldehyde dehydrogenase family. As to quaternary structure, homotetramer.

The enzyme catalyses an aldehyde + NAD(+) + H2O = a carboxylate + NADH + 2 H(+). The chain is Putative aldehyde dehydrogenase family 7 member A1 homolog from Dictyostelium discoideum (Social amoeba).